Reading from the N-terminus, the 329-residue chain is MKNIAIIGASGYTGAQITSLINAEANLSIQGLYVSESSLDKGKPLSELYPAYSHISLCLNPLSEDAKQTIVATADAVVLATDHAVSLHLAAWFYQQGLAVFDLSGAYRFSDVAQYPKWYGFTHEYPQVLADAVYGLAEWNSDQIAATKMIAVPGCYPTASLIALKPLSHLLTDVLPVINAVSGVTGAGRKAQLHTSFCEVSLTPYGVLAHRHQPEIATQLGQEVIFTPHLGNFKRGILATITVKLKPGTTLSDIQQAYQCYDSAELVTVKQNQFPKVDDVVQTPHCHLGWKFDEQTGYLVVASAIDNLMKGAASQALQCIKIHFGESVK.

Cys155 is a catalytic residue.

It belongs to the NAGSA dehydrogenase family. Type 1 subfamily.

Its subcellular location is the cytoplasm. The catalysed reaction is N-acetyl-L-glutamate 5-semialdehyde + phosphate + NADP(+) = N-acetyl-L-glutamyl 5-phosphate + NADPH + H(+). Its pathway is amino-acid biosynthesis; L-arginine biosynthesis; N(2)-acetyl-L-ornithine from L-glutamate: step 3/4. Functionally, catalyzes the NADPH-dependent reduction of N-acetyl-5-glutamyl phosphate to yield N-acetyl-L-glutamate 5-semialdehyde. The polypeptide is N-acetyl-gamma-glutamyl-phosphate reductase (Shewanella pealeana (strain ATCC 700345 / ANG-SQ1)).